Here is a 567-residue protein sequence, read N- to C-terminus: Urease subunit alpha (567 aa).

The 439-residue stretch at 129–567 (GGIDAHIHFI…LPLTQRYCLF (439 aa)) folds into the Urease domain. His-134, His-136, and Lys-217 together coordinate Ni(2+). Lys-217 is modified (N6-carboxylysine). Position 219 (His-219) interacts with substrate. Positions 246 and 272 each coordinate Ni(2+). His-320 functions as the Proton donor in the catalytic mechanism. Asp-360 contributes to the Ni(2+) binding site.

The protein belongs to the metallo-dependent hydrolases superfamily. Urease alpha subunit family. In terms of assembly, heterotrimer of UreA (gamma), UreB (beta) and UreC (alpha) subunits. Three heterotrimers associate to form the active enzyme. It depends on Ni cation as a cofactor. In terms of processing, carboxylation allows a single lysine to coordinate two nickel ions.

The protein resides in the cytoplasm. It catalyses the reaction urea + 2 H2O + H(+) = hydrogencarbonate + 2 NH4(+). It functions in the pathway nitrogen metabolism; urea degradation; CO(2) and NH(3) from urea (urease route): step 1/1. In Psychromonas ingrahamii (strain DSM 17664 / CCUG 51855 / 37), this protein is Urease subunit alpha.